The following is a 626-amino-acid chain: Phosphomethylpyrimidine synthase (626 aa).

Residues Asn-237, Met-266, Tyr-295, His-331, 351–353 (SRG), 392–395 (DGLR), and Glu-431 contribute to the substrate site. Residue His-435 coordinates Zn(2+). Tyr-458 contacts substrate. His-499 is a Zn(2+) binding site. The [4Fe-4S] cluster site is built by Cys-579, Cys-582, and Cys-587.

Belongs to the ThiC family. As to quaternary structure, homodimer. [4Fe-4S] cluster is required as a cofactor.

The catalysed reaction is 5-amino-1-(5-phospho-beta-D-ribosyl)imidazole + S-adenosyl-L-methionine = 4-amino-2-methyl-5-(phosphooxymethyl)pyrimidine + CO + 5'-deoxyadenosine + formate + L-methionine + 3 H(+). It functions in the pathway cofactor biosynthesis; thiamine diphosphate biosynthesis. Its function is as follows. Catalyzes the synthesis of the hydroxymethylpyrimidine phosphate (HMP-P) moiety of thiamine from aminoimidazole ribotide (AIR) in a radical S-adenosyl-L-methionine (SAM)-dependent reaction. The chain is Phosphomethylpyrimidine synthase from Cupriavidus pinatubonensis (strain JMP 134 / LMG 1197) (Cupriavidus necator (strain JMP 134)).